Reading from the N-terminus, the 416-residue chain is Adenylosuccinate synthetase (416 aa).

Residues 12-18 and 40-42 contribute to the GTP site; these read GDEGKGK and GHT. The active-site Proton acceptor is the Asp-13. 2 residues coordinate Mg(2+): Asp-13 and Gly-40. Residues 13–16, 38–41, Thr-125, Arg-139, Gln-219, Thr-234, and Arg-298 contribute to the IMP site; these read DEGK and NAGH. His-41 acts as the Proton donor in catalysis. Residue 294-300 coordinates substrate; the sequence is TVTGRKR. GTP is bound by residues Arg-300, 326 to 328, and 404 to 406; these read KLD and STS.

This sequence belongs to the adenylosuccinate synthetase family. In terms of assembly, homodimer. It depends on Mg(2+) as a cofactor.

It localises to the cytoplasm. It carries out the reaction IMP + L-aspartate + GTP = N(6)-(1,2-dicarboxyethyl)-AMP + GDP + phosphate + 2 H(+). Its pathway is purine metabolism; AMP biosynthesis via de novo pathway; AMP from IMP: step 1/2. In terms of biological role, plays an important role in the de novo pathway of purine nucleotide biosynthesis. Catalyzes the first committed step in the biosynthesis of AMP from IMP. This is Adenylosuccinate synthetase from Aliarcobacter butzleri (strain RM4018) (Arcobacter butzleri).